Here is a 370-residue protein sequence, read N- to C-terminus: Proline-rich protein 5-like (370 aa).

Position 28 is a phosphoserine (serine 28). A disordered region spans residues 327 to 370 (PTFPPPHRQCSSEPSILDSPDEMELEDVASGSQEDSELNCASLS).

The protein belongs to the PROTOR family. As to quaternary structure, interacts with the mammalian target of rapamycin complex 2 (mTORC2) which contains MTOR, MLST8, PRR5, RICTOR, MAPKAP1 and DEPTOR. Interacts with RFFL. Interacts (via C-terminus) with ZFP36 (via C-terminus); this interaction may accelerate ZFP36-mediated mRNA decay during stress. Interacts with RICTOR. Post-translationally, ubiquitinated. Ubiquitination by RFFL promotes proteasomal degradation of PRR5L thereby modifying the substrate-specific activity of the mTORC2 complex. Ubiquitination by RFFL is stimulated by LPA/lysophosphatidic acid.

Its function is as follows. Associates with the mTORC2 complex that regulates cellular processes including survival and organization of the cytoskeleton. Regulates the activity of the mTORC2 complex in a substrate-specific manner preventing for instance the specific phosphorylation of PKCs and thereby controlling cell migration. Plays a role in the stimulation of ZFP36-mediated mRNA decay of several ZFP36-associated mRNAs, such as TNF-alpha and GM-CSF, in response to stress. Required for ZFP36 localization to cytoplasmic stress granule (SG) and P-body (PB) in response to stress. In Rattus norvegicus (Rat), this protein is Proline-rich protein 5-like (Prr5l).